We begin with the raw amino-acid sequence, 306 residues long: UDP-N-acetylenolpyruvoylglucosamine reductase (306 aa).

Residues 34–198 (VGGPADLLIT…LEVTFKLHNS (165 aa)) enclose the FAD-binding PCMH-type domain. Arg-177 is a catalytic residue. Ser-227 acts as the Proton donor in catalysis. Glu-297 is an active-site residue.

The protein belongs to the MurB family. FAD serves as cofactor.

It localises to the cytoplasm. The enzyme catalyses UDP-N-acetyl-alpha-D-muramate + NADP(+) = UDP-N-acetyl-3-O-(1-carboxyvinyl)-alpha-D-glucosamine + NADPH + H(+). Its pathway is cell wall biogenesis; peptidoglycan biosynthesis. In terms of biological role, cell wall formation. This Clostridium botulinum (strain Langeland / NCTC 10281 / Type F) protein is UDP-N-acetylenolpyruvoylglucosamine reductase.